Reading from the N-terminus, the 245-residue chain is Ribosomal RNA small subunit methyltransferase G (245 aa).

Residues Gly-85, Phe-90, 108-110 (DST), 136-137 (AE), and Arg-155 each bind S-adenosyl-L-methionine.

The protein belongs to the methyltransferase superfamily. RNA methyltransferase RsmG family.

Its subcellular location is the cytoplasm. In terms of biological role, specifically methylates the N7 position of a guanine in 16S rRNA. The protein is Ribosomal RNA small subunit methyltransferase G of Nostoc sp. (strain PCC 7120 / SAG 25.82 / UTEX 2576).